The following is an 88-amino-acid chain: Small ribosomal subunit protein bS20 (88 aa).

The interval 1–27 is disordered; that stretch reads MANIKSQIKRNKTNEKARLRNKAVKSS.

This sequence belongs to the bacterial ribosomal protein bS20 family.

Binds directly to 16S ribosomal RNA. This chain is Small ribosomal subunit protein bS20, found in Streptomyces griseus subsp. griseus (strain JCM 4626 / CBS 651.72 / NBRC 13350 / KCC S-0626 / ISP 5235).